Here is a 490-residue protein sequence, read N- to C-terminus: Cytochrome P450 90D2 (490 aa).

Residues 4-24 (AAAGWAAPAFAVAAVVIWVVL) form a helical membrane-spanning segment. Heme is bound at residue cysteine 437.

The protein belongs to the cytochrome P450 family. Heme is required as a cofactor. Expressed at low levels leaf blades, shoot apex and elongating stem.

The protein localises to the membrane. The enzyme catalyses 6-deoxoteasterone + reduced [NADPH--hemoprotein reductase] + O2 = 3-dehydro-6-deoxoteasterone + oxidized [NADPH--hemoprotein reductase] + 2 H2O + H(+). It participates in plant hormone biosynthesis; brassinosteroid biosynthesis. Its function is as follows. Catalyzes the C6-oxidation step in brassinosteroids biosynthesis. May convert 6-deoxoteasterone (6-deoxoTE) to 3-dehydro-6-deoxoteasterone (6-deoxo3DT, 6-deoxo3DHT), and teasterone (TE) to 3-dehydroteasterone (3DT, 3-DHT). Involved in the elongation of leaf sheaths and stems. The chain is Cytochrome P450 90D2 from Oryza sativa subsp. japonica (Rice).